A 1359-amino-acid chain; its full sequence is DNA-directed RNA polymerase subunit beta (1359 aa).

The protein belongs to the RNA polymerase beta chain family. As to quaternary structure, the RNAP catalytic core consists of 2 alpha, 1 beta, 1 beta' and 1 omega subunit. When a sigma factor is associated with the core the holoenzyme is formed, which can initiate transcription.

It catalyses the reaction RNA(n) + a ribonucleoside 5'-triphosphate = RNA(n+1) + diphosphate. DNA-dependent RNA polymerase catalyzes the transcription of DNA into RNA using the four ribonucleoside triphosphates as substrates. The chain is DNA-directed RNA polymerase subunit beta from Nitrosomonas eutropha (strain DSM 101675 / C91 / Nm57).